The following is a 334-amino-acid chain: Flotillin-like protein FloA (334 aa).

A helical membrane pass occupies residues 3–23; sequence LYLIFLIVVGVVGLVLVGLFL.

It belongs to the flotillin-like FloA family. In terms of assembly, homooligomerizes.

The protein resides in the cell membrane. It is found in the membrane raft. Found in functional membrane microdomains (FMM) that may be equivalent to eukaryotic membrane rafts. FMMs are highly dynamic and increase in number as cells age. Flotillins are thought to be important factors in membrane fluidity. This chain is Flotillin-like protein FloA, found in Opitutus terrae (strain DSM 11246 / JCM 15787 / PB90-1).